Reading from the N-terminus, the 219-residue chain is Nuclear transcription factor Y subunit B-8 (219 aa).

Positions Met-1–Asp-26 are disordered. Residues Leu-29–Ser-35 mediate DNA binding. A subunit association domain (SAD) region spans residues Val-56–Ile-67. Residues Ala-119–Thr-134 show a composition bias toward low complexity. 2 disordered regions span residues Ala-119–Ala-142 and Gly-166–Ala-219. The span at Gly-190–Ser-206 shows a compositional bias: gly residues.

The protein belongs to the NFYB/HAP3 subunit family. In terms of assembly, heterotrimeric transcription factor composed of three components, NF-YA, NF-YB and NF-YC. NF-YB and NF-YC must interact and dimerize for NF-YA association and DNA binding. Interacts with NFYC2, NFYC4 and NFYC6.

The protein resides in the cytoplasm. Its function is as follows. Component of the NF-Y/HAP transcription factor complex. This chain is Nuclear transcription factor Y subunit B-8, found in Oryza sativa subsp. japonica (Rice).